The primary structure comprises 248 residues: Mitochondrial import inner membrane translocase subunit Tim21 (248 aa).

The transit peptide at methionine 1–serine 18 directs the protein to the mitochondrion. The disordered stretch occupies residues threonine 67 to serine 98. The helical transmembrane segment at phenylalanine 108–isoleucine 128 threads the bilayer.

Belongs to the TIM21 family. Component of the TIM23 complex. Component of the MITRAC (mitochondrial translation regulation assembly intermediate of cytochrome c oxidase complex) complex, the core components of this complex being COA3/MITRAC12 and COX14. Interacts with COA3 and MT-CO1/COX1.

The protein resides in the mitochondrion membrane. In terms of biological role, participates in the translocation of transit peptide-containing proteins across the mitochondrial inner membrane. Also required for assembly of mitochondrial respiratory chain complex I and complex IV as component of the MITRAC (mitochondrial translation regulation assembly intermediate of cytochrome c oxidase complex) complex. Probably shuttles between the presequence translocase and respiratory-chain assembly intermediates in a process that promotes incorporation of early nuclear-encoded subunits into these complexes. This is Mitochondrial import inner membrane translocase subunit Tim21 (TIMM21) from Homo sapiens (Human).